A 342-amino-acid polypeptide reads, in one-letter code: Methylthioribose-1-phosphate isomerase (342 aa).

Substrate-binding positions include 44 to 46, Arg87, and Gln194; that span reads RGA. The active-site Proton donor is the Asp235. 245–246 provides a ligand contact to substrate; the sequence is NK.

It belongs to the eIF-2B alpha/beta/delta subunits family. MtnA subfamily.

It carries out the reaction 5-(methylsulfanyl)-alpha-D-ribose 1-phosphate = 5-(methylsulfanyl)-D-ribulose 1-phosphate. It participates in amino-acid biosynthesis; L-methionine biosynthesis via salvage pathway; L-methionine from S-methyl-5-thio-alpha-D-ribose 1-phosphate: step 1/6. In terms of biological role, catalyzes the interconversion of methylthioribose-1-phosphate (MTR-1-P) into methylthioribulose-1-phosphate (MTRu-1-P). The protein is Methylthioribose-1-phosphate isomerase of Acetivibrio thermocellus (strain ATCC 27405 / DSM 1237 / JCM 9322 / NBRC 103400 / NCIMB 10682 / NRRL B-4536 / VPI 7372) (Clostridium thermocellum).